Here is a 659-residue protein sequence, read N- to C-terminus: Cytochrome bo(3) ubiquinol oxidase subunit 1 (659 aa).

Topologically, residues Met1–Asp14 are extracellular. A helical transmembrane segment spans residues Pro15–Ile35. At Thr36–Lys56 the chain is on the cytoplasmic side. A helical transmembrane segment spans residues Ile57 to Ile77. Arg71, Asp75, and His101 together coordinate a ubiquinone. Residues Met78–His109 are Extracellular-facing. A heme b-binding site is contributed by His109. Residues Gly110–Val130 form a helical membrane-spanning segment. At Pro131–Ser148 the chain is on the cytoplasmic side. The helical transmembrane segment at Leu149–Ala169 threads the bilayer. Residues Gln170 to Tyr192 lie on the Extracellular side of the membrane. Heme b is bound at residue Trp173. A helical transmembrane segment spans residues Trp193–Val213. The Cytoplasmic segment spans residues Thr214 to Ser235. Residues Phe236–Leu256 form a helical membrane-spanning segment. The Extracellular segment spans residues Thr257–Asn280. A helical transmembrane segment spans residues Leu281–Phe301. His287 provides a ligand contact to Cu(2+). Residues His287–Tyr291 constitute a cross-link (1'-histidyl-3'-tyrosine (His-Tyr)). Tyr291 contacts Fe(II)-heme o. Topologically, residues Ser302–Ser318 are cytoplasmic. Residues Leu319–Phe339 traverse the membrane as a helical segment. Residues His336 and His337 each coordinate Cu(2+). Residues Thr340–Phe350 are Extracellular-facing. The chain crosses the membrane as a helical span at residues Phe351–Phe371. At Thr372 to Ser382 the chain is on the cytoplasmic side. Residues Ile383 to Leu403 form a helical membrane-spanning segment. Topologically, residues Leu404–Ser416 are extracellular. The Fe(II)-heme o site is built by His414 and His422. The chain crosses the membrane as a helical span at residues Leu417–Ala437. His424 serves as a coordination point for heme b. The Cytoplasmic segment spans residues Gly438–Ala459. A helical membrane pass occupies residues Phe460 to Met480. The Extracellular segment spans residues Gly481–Thr499. Positions 484 and 485 each coordinate heme b. A helical membrane pass occupies residues Ile500–Phe520. Residues Val521 to His587 lie on the Cytoplasmic side of the membrane. A helical membrane pass occupies residues Met588–Ser608. Ala609 is a topological domain (extracellular). A helical membrane pass occupies residues Val610–Ile630. Over Lys631–Asp659 the chain is Cytoplasmic.

The protein belongs to the heme-copper respiratory oxidase family. In terms of assembly, the cytochrome bo(3) ubiquinol oxidase complex is a heterooctamer of two A chains, two B chains, two C chains and two D chains. The cofactor is Cu(2+). Heme b serves as cofactor. Requires Fe(II)-heme o as cofactor.

It localises to the cell membrane. The enzyme catalyses 2 a ubiquinol + O2 + n H(+)(in) = 2 a ubiquinone + 2 H2O + n H(+)(out). Functionally, cytochrome bo(3) ubiquinol oxidase is the terminal enzyme in the aerobic respiratory chain. Catalyzes the four-electron reduction of O2 to water, using a ubiquinol as a membrane soluble electron donor for molecular oxygen reduction. Has proton pump activity across the membrane in addition to electron transfer, pumping 2 protons/electron and generating a proton motive force. All the redox centers of this enzyme complex are located within the largest subunit, subunit I. Protons are probably pumped via D- and K- channels found in this subunit. The chain is Cytochrome bo(3) ubiquinol oxidase subunit 1 (cyoB) from Buchnera aphidicola subsp. Baizongia pistaciae (strain Bp).